We begin with the raw amino-acid sequence, 220 residues long: Deoxyribose-phosphate aldolase (220 aa).

D92 acts as the Proton donor/acceptor in catalysis. K155 acts as the Schiff-base intermediate with acetaldehyde in catalysis. K184 acts as the Proton donor/acceptor in catalysis.

Belongs to the DeoC/FbaB aldolase family. DeoC type 1 subfamily.

The protein resides in the cytoplasm. It catalyses the reaction 2-deoxy-D-ribose 5-phosphate = D-glyceraldehyde 3-phosphate + acetaldehyde. Its pathway is carbohydrate degradation; 2-deoxy-D-ribose 1-phosphate degradation; D-glyceraldehyde 3-phosphate and acetaldehyde from 2-deoxy-alpha-D-ribose 1-phosphate: step 2/2. Its function is as follows. Catalyzes a reversible aldol reaction between acetaldehyde and D-glyceraldehyde 3-phosphate to generate 2-deoxy-D-ribose 5-phosphate. The chain is Deoxyribose-phosphate aldolase from Symbiobacterium thermophilum (strain DSM 24528 / JCM 14929 / IAM 14863 / T).